The sequence spans 287 residues: Bifunctional protein FolD (287 aa).

NADP(+) is bound by residues 169–171 (GRS) and Ser194.

The protein belongs to the tetrahydrofolate dehydrogenase/cyclohydrolase family. In terms of assembly, homodimer.

The enzyme catalyses (6R)-5,10-methylene-5,6,7,8-tetrahydrofolate + NADP(+) = (6R)-5,10-methenyltetrahydrofolate + NADPH. It carries out the reaction (6R)-5,10-methenyltetrahydrofolate + H2O = (6R)-10-formyltetrahydrofolate + H(+). Its pathway is one-carbon metabolism; tetrahydrofolate interconversion. Catalyzes the oxidation of 5,10-methylenetetrahydrofolate to 5,10-methenyltetrahydrofolate and then the hydrolysis of 5,10-methenyltetrahydrofolate to 10-formyltetrahydrofolate. The chain is Bifunctional protein FolD from Albidiferax ferrireducens (strain ATCC BAA-621 / DSM 15236 / T118) (Rhodoferax ferrireducens).